Reading from the N-terminus, the 72-residue chain is Protein RALF-like 12 (72 aa).

An N-terminal signal peptide occupies residues 1 to 17 (MKAWVIGLLVICAVVIA). 2 disulfides stabilise this stretch: Cys34-Cys43 and Cys63-Cys69. The tract at residues 37 to 60 (PNPPPGCNPPGTEQKNPTPVNEYS) is disordered.

Belongs to the plant rapid alkalinization factor (RALF) family.

It localises to the secreted. In terms of biological role, cell signaling peptide that may regulate plant stress, growth, and development. Mediates a rapid alkalinization of extracellular space by mediating a transient increase in the cytoplasmic Ca(2+) concentration leading to a calcium-dependent signaling events through a cell surface receptor and a concomitant activation of some intracellular mitogen-activated protein kinases. The sequence is that of Protein RALF-like 12 (RALFL12) from Arabidopsis thaliana (Mouse-ear cress).